Consider the following 279-residue polypeptide: Elongation factor Ts (279 aa).

An involved in Mg(2+) ion dislocation from EF-Tu region spans residues Thr80–Val83.

Belongs to the EF-Ts family.

The protein localises to the cytoplasm. Associates with the EF-Tu.GDP complex and induces the exchange of GDP to GTP. It remains bound to the aminoacyl-tRNA.EF-Tu.GTP complex up to the GTP hydrolysis stage on the ribosome. The protein is Elongation factor Ts of Borrelia garinii subsp. bavariensis (strain ATCC BAA-2496 / DSM 23469 / PBi) (Borreliella bavariensis).